The sequence spans 345 residues: uncharacterized protein (345 aa).

M1 is a domain (TBDR plug). Positions 1-345 (MDLGPIYNTR…EVILNTKIEF (345 aa)) constitute a TBDR beta-barrel domain. Positions 328-345 (PVALGYAREVILNTKIEF) match the TonB C-terminal box motif.

This sequence belongs to the TonB-dependent receptor family.

It localises to the cell outer membrane. This is an uncharacterized protein from Haemophilus influenzae (strain ATCC 51907 / DSM 11121 / KW20 / Rd).